A 379-amino-acid polypeptide reads, in one-letter code: Flagellar P-ring protein (379 aa).

The first 32 residues, 1–32 (MTAPAGFLPRVGRLIAVALTAVFLLAPTGAEA), serve as a signal peptide directing secretion.

Belongs to the FlgI family. As to quaternary structure, the basal body constitutes a major portion of the flagellar organelle and consists of four rings (L,P,S, and M) mounted on a central rod.

Its subcellular location is the periplasm. The protein localises to the bacterial flagellum basal body. Its function is as follows. Assembles around the rod to form the L-ring and probably protects the motor/basal body from shearing forces during rotation. The chain is Flagellar P-ring protein from Rhodospirillum rubrum (strain ATCC 11170 / ATH 1.1.1 / DSM 467 / LMG 4362 / NCIMB 8255 / S1).